The chain runs to 266 residues: Protein crossbronx-like (266 aa).

One can recognise a UBC core domain in the interval 15–178 (KQGYHILAEY…VQEQAIASRN (164 aa)).

This sequence belongs to the ubiquitin-conjugating enzyme family. FTS subfamily.

The protein is Protein crossbronx-like of Drosophila yakuba (Fruit fly).